A 221-amino-acid polypeptide reads, in one-letter code: Queuosine precursor transporter (221 aa).

At 1–12 (MNVFSQTQRYKA) the chain is on the cytoplasmic side. A helical transmembrane segment spans residues 13 to 33 (LFWLSLFHLLVITSSNYLVQL). Residue Pro-34 is a topological domain, periplasmic. The chain crosses the membrane as a helical span at residues 35 to 55 (VSILGFHTTWGAFSFPFIFLA). The Cytoplasmic segment spans residues 56 to 70 (TDLTVRIFGAPLARR). The helical transmembrane segment at 71-91 (IIFAVMIPALLISYVISSLFY) threads the bilayer. Residues 92-97 (MGSWQG) are Periplasmic-facing. Residues 98-118 (FGALAHFNLFVARIATASFMA) traverse the membrane as a helical segment. At 119–143 (YALGQILDVHVFNRLRQSRRWWLAP) the chain is on the cytoplasmic side. A helical membrane pass occupies residues 144 to 164 (TASTLFGNVSDTLAFFFIAFW). Topologically, residues 165–184 (RSPDAFMAEHWMEIALVDYC) are periplasmic. The helical transmembrane segment at 185–205 (FKVLISIVFFLPMYGVLLNML) threads the bilayer. At 206–221 (LKRLADKSEINALQAS) the chain is on the cytoplasmic side.

The protein belongs to the vitamin uptake transporter (VUT/ECF) (TC 2.A.88) family. Q precursor transporter subfamily.

The protein localises to the cell inner membrane. Functionally, involved in the import of queuosine (Q) precursors, required for Q precursor salvage. Transports 7-cyano-7-deazaguanine (preQ(0)) and 7-aminomethyl-7-deazaguanine (preQ(1)), with a preference for preQ(0). This is Queuosine precursor transporter (yhhQ) from Escherichia coli (strain K12).